The chain runs to 1088 residues: DEAD-box ATP-dependent RNA helicase 40 (1088 aa).

3 disordered regions span residues 1-28 (MATT…PWKG), 47-178 (TQYE…QYAH), and 192-254 (TQGL…QNTH). N-acetylalanine is present on Ala-2. One can recognise a WW domain in the interval 20–54 (PTLPQPWKGLIDGSTGILYYWNPETNVTQYERPSA). Low complexity-rich tracts occupy residues 87 to 137 (VGHV…SQSM), 148 to 171 (QTYQ…MPQQ), and 200 to 215 (QTPQ…PSQQ). Positions 222 to 231 (PKREGDEFHG) are enriched in basic and acidic residues. Polar residues predominate over residues 236-254 (GFSQPHLPNSERSPSQNTH). A Q motif motif is present at residues 435 to 463 (ITFESSGLPPEILRELLSAGFPSPTPIQA). One can recognise a Helicase ATP-binding domain in the interval 466-640 (WPIALQSRDI…SDLLVNPVQV (175 aa)). Residue 479–486 (AKTGSGKT) participates in ATP binding. The DEAD box motif lies at 588–591 (DEAD). The Helicase C-terminal domain maps to 669–813 (RLEQILRSQE…QVPPQVRDIA (145 aa)). Composition is skewed to gly residues over residues 861 to 885 (EGGF…GGRF), 893 to 902 (GRGGNRGRGF), 911 to 920 (NVGGRGGFGR), and 932 to 944 (FGRG…GRGV). The segment at 861–1033 (EGGFGGREGG…RRDRAPRVSG (173 aa)) is disordered. The span at 945–963 (GRFDNRRGRSRSRSPDLVR) shows a compositional bias: basic and acidic residues. Residues 969–983 (SSYSRSRSRSGSYSR) are compositionally biased toward low complexity. Basic residues predominate over residues 984 to 1013 (SRSRSRSWSRSRSRSPRHSRDRGGHNRSRS).

The protein belongs to the DEAD box helicase family. DDX5/DBP2 subfamily.

The protein localises to the nucleus. The catalysed reaction is ATP + H2O = ADP + phosphate + H(+). ATP-dependent RNA helicase involved nonsense-mediated mRNA decay and ribosome biogenesis through rRNA processing. This is DEAD-box ATP-dependent RNA helicase 40 (RH40) from Arabidopsis thaliana (Mouse-ear cress).